Consider the following 629-residue polypeptide: tRNA uridine 5-carboxymethylaminomethyl modification enzyme MnmG (629 aa).

Residue 11–16 (GGGHAG) participates in FAD binding. Position 273–287 (273–287 (GPRYCPSFEDKVVRF)) interacts with NAD(+).

It belongs to the MnmG family. In terms of assembly, homodimer. Heterotetramer of two MnmE and two MnmG subunits. Requires FAD as cofactor.

Its subcellular location is the cytoplasm. Functionally, NAD-binding protein involved in the addition of a carboxymethylaminomethyl (cmnm) group at the wobble position (U34) of certain tRNAs, forming tRNA-cmnm(5)s(2)U34. This is tRNA uridine 5-carboxymethylaminomethyl modification enzyme MnmG from Mycoplasma capricolum subsp. capricolum (strain California kid / ATCC 27343 / NCTC 10154).